The primary structure comprises 605 residues: Leucine-rich repeat-containing protein 40 (605 aa).

Positions 1 to 21 are disordered; sequence MSRFKRGGKAPDPLSGFRAPK. LRR repeat units follow at residues 83-104, 106-127, 129-151, 152-173, 175-196, 198-219, 221-242, 244-265, 266-287, 290-311, 313-335, 336-357, 429-450, 453-475, 476-497, 499-520, 522-543, 546-567, and 569-590; these read DLTK…ISLL, ALVV…IREL, NLQK…QHLQ, NLKS…IGHL, ILEE…VGQL, GLVK…IGKM, NLRQ…VAGM, SLEQ…PFLT, KLKE…HLQN, SLSV…ISLL, GLER…GSLP, NLKS…ILNK, PITT…IVEM, SVYD…CMLL, KLTH…MEAL, RLQS…LYTI, NLET…QLKK, KLST…LGNC, and SLRA…ILAK.

The protein is Leucine-rich repeat-containing protein 40 (lrrc40) of Xenopus laevis (African clawed frog).